The following is a 1396-amino-acid chain: DNA-directed RNA polymerase subunit beta' (1396 aa).

Zn(2+) contacts are provided by cysteine 72, cysteine 74, cysteine 87, and cysteine 90. Residues aspartate 463, aspartate 465, and aspartate 467 each contribute to the Mg(2+) site. Zn(2+) contacts are provided by cysteine 814, cysteine 889, cysteine 896, and cysteine 899.

This sequence belongs to the RNA polymerase beta' chain family. As to quaternary structure, the RNAP catalytic core consists of 2 alpha, 1 beta, 1 beta' and 1 omega subunit. When a sigma factor is associated with the core the holoenzyme is formed, which can initiate transcription. The cofactor is Mg(2+). It depends on Zn(2+) as a cofactor.

The catalysed reaction is RNA(n) + a ribonucleoside 5'-triphosphate = RNA(n+1) + diphosphate. Its function is as follows. DNA-dependent RNA polymerase catalyzes the transcription of DNA into RNA using the four ribonucleoside triphosphates as substrates. The chain is DNA-directed RNA polymerase subunit beta' from Chlamydia trachomatis serovar L2b (strain UCH-1/proctitis).